Consider the following 135-residue polypeptide: Protein E6 (135 aa).

Zinc fingers lie at residues 11-47 (CVFC…CTAC) and 83-119 (CMYC…CYTC).

Belongs to the papillomaviridae E6 protein family. Forms homodimers. Interacts with ubiquitin-protein ligase UBE3A/E6-AP; this interaction stimulates UBE3A ubiquitin activity. Interacts with host BAK1.

It is found in the host cytoplasm. It localises to the host nucleus. Its function is as follows. Plays a major role in the induction and maintenance of cellular transformation. E6 associates with host UBE3A/E6-AP ubiquitin-protein ligase and modulates its activity. Protects host keratinocytes from apoptosis by mediating the degradation of host BAK1. May also inhibit host immune response. The polypeptide is Protein E6 (Odocoileus virginianus papillomavirus 1 (DPV)).